Consider the following 213-residue polypeptide: Large ribosomal subunit protein uL3 (213 aa).

The tract at residues 122 to 147 (AIKRHGQSRGPMAHGSRYHRRPGSMG) is disordered.

This sequence belongs to the universal ribosomal protein uL3 family. As to quaternary structure, part of the 50S ribosomal subunit. Forms a cluster with proteins L14 and L19.

Its function is as follows. One of the primary rRNA binding proteins, it binds directly near the 3'-end of the 23S rRNA, where it nucleates assembly of the 50S subunit. This Geobacillus stearothermophilus (Bacillus stearothermophilus) protein is Large ribosomal subunit protein uL3.